An 874-amino-acid chain; its full sequence is Bifunctional uridylyltransferase/uridylyl-removing enzyme (874 aa).

The tract at residues 1–332 (MPLQSPLTFS…NGGATENAEI (332 aa)) is uridylyltransferase. The segment at 333-692 (LDADFQRRGS…ISKKATRGGT (360 aa)) is uridylyl-removing. The region spanning 451 to 573 (VDEHSIRLLK…VRDEESLEYL (123 aa)) is the HD domain. 2 consecutive ACT domains span residues 693 to 777 (EVFV…RTPN) and 800 to 874 (LMEF…AVTA).

The protein belongs to the GlnD family. It depends on Mg(2+) as a cofactor.

It catalyses the reaction [protein-PII]-L-tyrosine + UTP = [protein-PII]-uridylyl-L-tyrosine + diphosphate. The catalysed reaction is [protein-PII]-uridylyl-L-tyrosine + H2O = [protein-PII]-L-tyrosine + UMP + H(+). Its activity is regulated as follows. Uridylyltransferase (UTase) activity is inhibited by glutamine, while glutamine activates uridylyl-removing (UR) activity. Modifies, by uridylylation and deuridylylation, the PII regulatory proteins (GlnB and homologs), in response to the nitrogen status of the cell that GlnD senses through the glutamine level. Under low glutamine levels, catalyzes the conversion of the PII proteins and UTP to PII-UMP and PPi, while under higher glutamine levels, GlnD hydrolyzes PII-UMP to PII and UMP (deuridylylation). Thus, controls uridylylation state and activity of the PII proteins, and plays an important role in the regulation of nitrogen assimilation and metabolism. The sequence is that of Bifunctional uridylyltransferase/uridylyl-removing enzyme from Vibrio parahaemolyticus serotype O3:K6 (strain RIMD 2210633).